Reading from the N-terminus, the 722-residue chain is Dual specificity tyrosine-phosphorylation-regulated kinase 2 (722 aa).

Position 25 is a phosphoserine (S25). The interval T54 to M127 is disordered. Residues G66–G119 show a composition bias toward low complexity. In terms of domain architecture, Protein kinase spans Y198–L494. Residues I204–V212 and K227 each bind ATP. D324 (proton acceptor) is an active-site residue. Phosphotyrosine; by autocatalysis is present on residues Y356 and Y358. Disordered stretches follow at residues L494 to V519, T557 to K582, G624 to T643, and T679 to A722. A compositionally biased stretch (low complexity) spans R506–V519. Residues T557–G576 show a composition bias toward polar residues. Composition is skewed to low complexity over residues G626–A635 and G689–S707.

Belongs to the protein kinase superfamily. CMGC Ser/Thr protein kinase family. MNB/DYRK subfamily. Mg(2+) serves as cofactor. In terms of processing, phosphorylated on serine/threonine residues.

The protein localises to the cytoplasm. It carries out the reaction L-seryl-[protein] + ATP = O-phospho-L-seryl-[protein] + ADP + H(+). The enzyme catalyses L-threonyl-[protein] + ATP = O-phospho-L-threonyl-[protein] + ADP + H(+). It catalyses the reaction L-tyrosyl-[protein] + ATP = O-phospho-L-tyrosyl-[protein] + ADP + H(+). With respect to regulation, autophosphorylates on Tyr-356 and Tyr-358. Its function is as follows. In vitro; can phosphorylate exogenous substrates on Ser and Thr residues. May have a physiological role in development being involved in cellular growth and differentiation. The sequence is that of Dual specificity tyrosine-phosphorylation-regulated kinase 2 from Drosophila melanogaster (Fruit fly).